Consider the following 259-residue polypeptide: Hydroxyacylglutathione hydrolase (259 aa).

Positions 56, 58, 60, 61, 112, 133, and 171 each coordinate Zn(2+).

This sequence belongs to the metallo-beta-lactamase superfamily. Glyoxalase II family. As to quaternary structure, monomer. The cofactor is Zn(2+).

The catalysed reaction is an S-(2-hydroxyacyl)glutathione + H2O = a 2-hydroxy carboxylate + glutathione + H(+). It participates in secondary metabolite metabolism; methylglyoxal degradation; (R)-lactate from methylglyoxal: step 2/2. Thiolesterase that catalyzes the hydrolysis of S-D-lactoyl-glutathione to form glutathione and D-lactic acid. This chain is Hydroxyacylglutathione hydrolase, found in Pseudomonas putida (strain ATCC 47054 / DSM 6125 / CFBP 8728 / NCIMB 11950 / KT2440).